Consider the following 238-residue polypeptide: ATP synthase subunit a (238 aa).

4 helical membrane passes run 17–37 (LSNILMITVTCVIVLLIAIIC), 80–100 (ITLLMFIFVANMLGLPFQIAI), 112–132 (DPIVTLTLAIMVLGLTHYYGI), and 194–214 (IFVGVLAIIPALLWQGFSIFI).

This sequence belongs to the ATPase A chain family. In terms of assembly, F-type ATPases have 2 components, CF(1) - the catalytic core - and CF(0) - the membrane proton channel. CF(1) has five subunits: alpha(3), beta(3), gamma(1), delta(1), epsilon(1). CF(0) has three main subunits: a(1), b(2) and c(9-12). The alpha and beta chains form an alternating ring which encloses part of the gamma chain. CF(1) is attached to CF(0) by a central stalk formed by the gamma and epsilon chains, while a peripheral stalk is formed by the delta and b chains.

It is found in the cell membrane. Its function is as follows. Key component of the proton channel; it plays a direct role in the translocation of protons across the membrane. The polypeptide is ATP synthase subunit a (Listeria innocua serovar 6a (strain ATCC BAA-680 / CLIP 11262)).